Here is a 700-residue protein sequence, read N- to C-terminus: Translation initiation factor IF-2 (700 aa).

The tract at residues 58-85 (KKEVKKQKEPSKEKGKSSEQVKVKEKSK) is disordered. A tr-type G domain is found at 191-365 (PRPPVVTIMG…EMQEIRCIPD (175 aa)). The segment at 200–207 (GHVDHGKT) is G1. GTP is bound at residue 200–207 (GHVDHGKT). Residues 225-229 (GITQS) are G2. Residues 246-249 (DTPG) form a G3 region. GTP-binding positions include 246-250 (DTPGH) and 300-303 (NKID). A G4 region spans residues 300-303 (NKID). The G5 stretch occupies residues 337 to 339 (SAK).

The protein belongs to the TRAFAC class translation factor GTPase superfamily. Classic translation factor GTPase family. IF-2 subfamily.

The protein resides in the cytoplasm. Functionally, one of the essential components for the initiation of protein synthesis. Protects formylmethionyl-tRNA from spontaneous hydrolysis and promotes its binding to the 30S ribosomal subunits. Also involved in the hydrolysis of GTP during the formation of the 70S ribosomal complex. The sequence is that of Translation initiation factor IF-2 from Petrotoga mobilis (strain DSM 10674 / SJ95).